The chain runs to 489 residues: Protein-export membrane protein SecD (489 aa).

Helical transmembrane passes span 17–37, 328–348, 356–376, 384–404, 428–448, and 450–470; these read VLIV…IPPA, FIQI…AFMV, SIVV…LGIA, LASI…LVVI, LGII…LALM, and LSTL…GVIF.

This sequence belongs to the SecD/SecF family. SecD subfamily. Part of the protein translocation apparatus. Forms a complex with SecF.

Its subcellular location is the cell membrane. Involved in protein export. This is Protein-export membrane protein SecD from Methanolacinia petrolearia (strain DSM 11571 / OCM 486 / SEBR 4847) (Methanoplanus petrolearius).